A 399-amino-acid polypeptide reads, in one-letter code: MIQYVTAGESHGPALSAIVDGMPAGVPLTDEAINHQLARRQQGYGRGGRMKIETDKAEVLSGIRFGKTIGSPIAMVIRNRDWQNWTTTMAQFEQPQEAIPAITVPRPGHADLAGCIKYGFEDIRPVIERSSARETAARVAAGACAKLFLKALGIEIGSIVTAIGSAKEEMPQQELAAMLAHGAEAVATQADQSPVRMLSKSAETAAIAAIDEAKANGDTVGGIVDVFITGVPLGFGSYVQHNRRLDADLAAALLSIQAIKGVEIGTAFDNACKYGSQVHDEFIFSESGELTRPTNRAGGIEGSMSSGQVIHLRAAMKPISSLISPLQSFDIASMEPIPSRFERSDTCAVPAAGVVAEAVVAPVIANALLAKLGGDHFSEIHERLEAYRAYLANRLQRKS.

Residues Arg40 and Arg46 each coordinate NADP(+). FMN-binding positions include 129–131 (RSS), 257–258 (QA), Gly302, 317–321 (KPISS), and Arg343.

It belongs to the chorismate synthase family. As to quaternary structure, homotetramer. It depends on FMNH2 as a cofactor.

The catalysed reaction is 5-O-(1-carboxyvinyl)-3-phosphoshikimate = chorismate + phosphate. The protein operates within metabolic intermediate biosynthesis; chorismate biosynthesis; chorismate from D-erythrose 4-phosphate and phosphoenolpyruvate: step 7/7. Functionally, catalyzes the anti-1,4-elimination of the C-3 phosphate and the C-6 proR hydrogen from 5-enolpyruvylshikimate-3-phosphate (EPSP) to yield chorismate, which is the branch point compound that serves as the starting substrate for the three terminal pathways of aromatic amino acid biosynthesis. This reaction introduces a second double bond into the aromatic ring system. This Chlorobium chlorochromatii (strain CaD3) protein is Chorismate synthase.